The chain runs to 1580 residues: Pentafunctional AROM polypeptide (1580 aa).

Positions 1 to 381 (MATPTVIKIL…HEQKASVVSN (381 aa)) are 3-dehydroquinate synthase. NAD(+)-binding positions include 44–46 (DTT), 81–84 (EVSK), 114–116 (GGV), and Asp119. Arg130 contacts 7-phospho-2-dehydro-3-deoxy-D-arabino-heptonate. Residue 139-140 (TT) participates in NAD(+) binding. Asp146 and Lys152 together coordinate 7-phospho-2-dehydro-3-deoxy-D-arabino-heptonate. Lys161 contacts NAD(+). Residue Asn162 coordinates 7-phospho-2-dehydro-3-deoxy-D-arabino-heptonate. Residues 179–182 (FLNT) and Asn190 each bind NAD(+). Residue Glu194 coordinates Zn(2+). Lys247 serves as a coordination point for 7-phospho-2-dehydro-3-deoxy-D-arabino-heptonate. The active-site Proton acceptor; for 3-dehydroquinate synthase activity is the Glu257. 7-phospho-2-dehydro-3-deoxy-D-arabino-heptonate contacts are provided by residues 261–265 (RNLLN) and His268. His268 is a binding site for Zn(2+). The active-site Proton acceptor; for 3-dehydroquinate synthase activity is His272. Residues His284 and Lys353 each coordinate 7-phospho-2-dehydro-3-deoxy-D-arabino-heptonate. His284 provides a ligand contact to Zn(2+). The EPSP synthase stretch occupies residues 394–838 (VSPGVPHALE…WDTLAQLFKA (445 aa)). Cys820 acts as the For EPSP synthase activity in catalysis. Residues 857–1048 (ASLFIIGMRG…KKKPQSFFVS (192 aa)) are shikimate kinase. 863-870 (GMRGAGKT) is an ATP binding site. Positions 1049–1269 (LTLPDLRPSV…AAPGQLSAKE (221 aa)) are 3-dehydroquinase. His1172 acts as the Proton acceptor; for 3-dehydroquinate dehydratase activity in catalysis. Lys1200 (schiff-base intermediate with substrate; for 3-dehydroquinate dehydratase activity) is an active-site residue. Residues 1282 to 1580 (SKKFAIVGKP…AAVMNADADI (299 aa)) form a shikimate dehydrogenase region.

The protein in the N-terminal section; belongs to the sugar phosphate cyclases superfamily. Dehydroquinate synthase family. In the 2nd section; belongs to the EPSP synthase family. It in the 3rd section; belongs to the shikimate kinase family. This sequence in the 4th section; belongs to the type-I 3-dehydroquinase family. The protein in the C-terminal section; belongs to the shikimate dehydrogenase family. Homodimer. Zn(2+) serves as cofactor.

The protein localises to the cytoplasm. It carries out the reaction 7-phospho-2-dehydro-3-deoxy-D-arabino-heptonate = 3-dehydroquinate + phosphate. It catalyses the reaction 3-dehydroquinate = 3-dehydroshikimate + H2O. The enzyme catalyses shikimate + NADP(+) = 3-dehydroshikimate + NADPH + H(+). The catalysed reaction is shikimate + ATP = 3-phosphoshikimate + ADP + H(+). It carries out the reaction 3-phosphoshikimate + phosphoenolpyruvate = 5-O-(1-carboxyvinyl)-3-phosphoshikimate + phosphate. Its pathway is metabolic intermediate biosynthesis; chorismate biosynthesis; chorismate from D-erythrose 4-phosphate and phosphoenolpyruvate: step 2/7. The protein operates within metabolic intermediate biosynthesis; chorismate biosynthesis; chorismate from D-erythrose 4-phosphate and phosphoenolpyruvate: step 3/7. It participates in metabolic intermediate biosynthesis; chorismate biosynthesis; chorismate from D-erythrose 4-phosphate and phosphoenolpyruvate: step 4/7. It functions in the pathway metabolic intermediate biosynthesis; chorismate biosynthesis; chorismate from D-erythrose 4-phosphate and phosphoenolpyruvate: step 5/7. Its pathway is metabolic intermediate biosynthesis; chorismate biosynthesis; chorismate from D-erythrose 4-phosphate and phosphoenolpyruvate: step 6/7. Its function is as follows. The AROM polypeptide catalyzes 5 consecutive enzymatic reactions in prechorismate polyaromatic amino acid biosynthesis. The polypeptide is Pentafunctional AROM polypeptide (Uncinocarpus reesii (strain UAMH 1704)).